The sequence spans 1117 residues: RNA-directed RNA polymerase (1117 aa).

The segment covering 1-17 has biased composition (polar residues); the sequence is MTVSGRSSWQNGKTTNA. Positions 1 to 23 are disordered; it reads MTVSGRSSWQNGKTTNAMRAGKL.

It catalyses the reaction RNA(n) + a ribonucleoside 5'-triphosphate = RNA(n+1) + diphosphate. Functionally, RNA-dependent RNA polymerase which replicates the viral genome. This chain is RNA-directed RNA polymerase (p1), found in Penicillium chrysogenum (Penicillium notatum).